Reading from the N-terminus, the 34-residue chain is Photosystem II reaction center protein M (34 aa).

Residues 5-25 (ILAFIATALFILIPTAFSLIL) traverse the membrane as a helical segment.

It belongs to the PsbM family. PSII is composed of 1 copy each of membrane proteins PsbA, PsbB, PsbC, PsbD, PsbE, PsbF, PsbH, PsbI, PsbJ, PsbK, PsbL, PsbM, PsbT, PsbX, PsbY, PsbZ, Psb30/Ycf12, at least 3 peripheral proteins of the oxygen-evolving complex and a large number of cofactors. It forms dimeric complexes.

The protein localises to the plastid. It localises to the chloroplast thylakoid membrane. Its function is as follows. One of the components of the core complex of photosystem II (PSII). PSII is a light-driven water:plastoquinone oxidoreductase that uses light energy to abstract electrons from H(2)O, generating O(2) and a proton gradient subsequently used for ATP formation. It consists of a core antenna complex that captures photons, and an electron transfer chain that converts photonic excitation into a charge separation. This subunit is found at the monomer-monomer interface. The protein is Photosystem II reaction center protein M of Huperzia lucidula (Shining clubmoss).